The primary structure comprises 646 residues: Choline transporter-like protein 1 (646 aa).

Over 1 to 27 (MGCCGCGSEEGSVRQWKPLEQRSCTDV) the chain is Cytoplasmic. A helical transmembrane segment spans residues 28–48 (LWLLIFVLFCIGMAIICGFAI). Over 49–207 (ASGAAQRLVF…RVITGVMTSK (159 aa)) the chain is Extracellular. An N-linked (GlcNAc...) asparagine glycan is attached at Asn133. Residues 208–228 (EIIVGLCLMSLVLSILLMVII) form a helical membrane-spanning segment. Topologically, residues 229 to 233 (RYISK) are cytoplasmic. A helical transmembrane segment spans residues 234–254 (VLVWILAILTIIGSIGGTAVL). The Extracellular segment spans residues 255–281 (WWLYADHKKTLKLDPSQGDVAADNVTA). N-linked (GlcNAc...) asparagine glycosylation occurs at Asn278. Residues 282–302 (LLVCAIIATVITVILLLLMLI) form a helical membrane-spanning segment. Topologically, residues 303–308 (MRKRVA) are cytoplasmic. The helical transmembrane segment at 309 to 329 (LTIALFHVAGKVFIHIPFLIF) threads the bilayer. The Extracellular portion of the chain corresponds to 330-331 (QS). A helical membrane pass occupies residues 332-352 (LWTFLALAFFWIYWIAVLLLL). Residues 353–373 (ATAGYPQKKDQGYVEFKVSGP) are Cytoplasmic-facing. Residues 374–394 (LQYTWIYHLVGLIWISEFILA) form a helical membrane-spanning segment. Residues 395–435 (CQQMTIAGAVVTYYFTRDKHNLPATPILASMCRLIKYHLGT) are Extracellular-facing. The chain crosses the membrane as a helical span at residues 436-456 (VAKGSFIITLIKIPQMILVYI). Over 457–530 (HSQLKGKENA…RVAAINTVGD (74 aa)) the chain is Cytoplasmic. Residues 531–551 (FVLFLGKLLIVLVTGFVGIIL) form a helical membrane-spanning segment. At 552–559 (LNYQRDYT) the chain is on the extracellular side. The chain crosses the membrane as a helical span at residues 560–580 (VWVLPLIIICLFAFFVSHCFL). Residues 581 to 646 (SIYEMVVDVL…KSMASGSDNA (66 aa)) are Cytoplasmic-facing.

Belongs to the CTL (choline transporter-like) family. In terms of tissue distribution, present in myelinated structures from brain and spinal cord (at protein level).

The protein resides in the cell membrane. It localises to the mitochondrion outer membrane. The enzyme catalyses choline(out) + n H(+)(in) = choline(in) + n H(+)(out). It carries out the reaction ethanolamine(out) + n H(+)(in) = ethanolamine(in) + n H(+)(out). Probable choline transporter. May be involved in membrane synthesis and myelin production. This is Choline transporter-like protein 1 (slc44a1) from Torpedo marmorata (Marbled electric ray).